The primary structure comprises 440 residues: Xylose isomerase (440 aa).

Catalysis depends on residues H100 and D103. Mg(2+) is bound by residues E231, E267, H270, D295, D306, D308, and D338.

It belongs to the xylose isomerase family. In terms of assembly, homotetramer. Mg(2+) is required as a cofactor.

The protein localises to the cytoplasm. It catalyses the reaction alpha-D-xylose = alpha-D-xylulofuranose. The polypeptide is Xylose isomerase (Burkholderia vietnamiensis (strain G4 / LMG 22486) (Burkholderia cepacia (strain R1808))).